A 263-amino-acid chain; its full sequence is Chaperone protein ClpE (263 aa).

An N-terminal signal peptide occupies residues 1-34 (MSKRNAVTTFFTNRVTKALGMTLALMMTCQSAMA). The segment covering 238–255 (QKKTPTSSGQKASDSLVN) has biased composition (polar residues). Positions 238-263 (QKKTPTSSGQKASDSLVNPSDKADKK) are disordered.

The protein belongs to the periplasmic pilus chaperone family.

The protein localises to the periplasm. Functionally, involved in the biogenesis of the CS31A capsule-like antigen. The sequence is that of Chaperone protein ClpE (clpE) from Escherichia coli.